The sequence spans 514 residues: Maturase K (514 aa).

The protein belongs to the intron maturase 2 family. MatK subfamily.

It localises to the plastid. The protein resides in the chloroplast. In terms of biological role, usually encoded in the trnK tRNA gene intron. Probably assists in splicing its own and other chloroplast group II introns. The sequence is that of Maturase K from Tsuga canadensis (Eastern hemlock).